The primary structure comprises 523 residues: Tyrosine/DOPA decarboxylase 5 (523 aa).

The segment covering 1-19 (MGSLPTDNLESMSICSQNP) has biased composition (polar residues). Disordered stretches follow at residues 1–20 (MGSL…QNPL) and 47–66 (SRSQ…APNH). Lys-321 is subject to N6-(pyridoxal phosphate)lysine.

This sequence belongs to the group II decarboxylase family. As to quaternary structure, homodimer. It depends on pyridoxal 5'-phosphate as a cofactor. In terms of tissue distribution, roots.

It carries out the reaction L-tyrosine + H(+) = tyramine + CO2. It catalyses the reaction L-dopa + H(+) = dopamine + CO2. The enzyme catalyses 5-hydroxy-L-tryptophan + H(+) = serotonin + CO2. Its function is as follows. May play an important role in providing precursors for alkaloid synthesis in the roots and germinating seedlings. This chain is Tyrosine/DOPA decarboxylase 5 (TYDC5), found in Papaver somniferum (Opium poppy).